The chain runs to 227 residues: uncharacterized protein (227 aa).

Belongs to the flavoredoxin family. It depends on FMN as a cofactor.

This is an uncharacterized protein from Deinococcus radiodurans (strain ATCC 13939 / DSM 20539 / JCM 16871 / CCUG 27074 / LMG 4051 / NBRC 15346 / NCIMB 9279 / VKM B-1422 / R1).